We begin with the raw amino-acid sequence, 855 residues long: Inactive rhomboid protein 1 (855 aa).

The disordered stretch occupies residues 1-36 (MSEARRDSTSSLQRKKPPWLKLDIPSAVPPTAEEPS). Over 1-411 (MSEARRDSTS…HRPFFTYWLT (411 aa)) the chain is Cytoplasmic. A phosphoserine mark is found at Ser-76 and Ser-176. Thr-180 and Thr-183 each carry phosphothreonine. The residue at position 390 (Ser-390) is a Phosphoserine. A helical transmembrane segment spans residues 412 to 432 (FVHSLVTILAVCIYGIAPVGF). The Lumenal segment spans residues 433 to 655 (SQHETVDSVL…NPEVPDQFYR (223 aa)). N-linked (GlcNAc...) asparagine glycosylation is present at Asn-583. Residues 656-676 (LWLSLFLHAGILHCLVSICFQ) form a helical membrane-spanning segment. The Cytoplasmic segment spans residues 677-691 (MTVLRDLEKLAGWHR). Residues 692-712 (IAIIYLLSGVTGNLASAIFLP) traverse the membrane as a helical segment. Residues 713-714 (YR) lie on the Lumenal side of the membrane. Residues 715–735 (AEVGPAGSQFGILACLFVELF) form a helical membrane-spanning segment. Topologically, residues 736-746 (QSWQILARPWR) are cytoplasmic. A helical membrane pass occupies residues 747–767 (AFFKLLAVVLFLFTFGLLPWI). The Lumenal portion of the chain corresponds to 768–772 (DNFAH). Residues 773 to 793 (ISGFISGLFLSFAFLPYISFG) form a helical membrane-spanning segment. Residues 794 to 803 (KFDLYRKRCQ) lie on the Cytoplasmic side of the membrane. The helical transmembrane segment at 804–824 (IIIFQVVFLGLLAGLVVLFYF) threads the bilayer. Residues 825–855 (YPVRCEWCEFLTCIPFTDKFCEKYELDAQLH) are Lumenal-facing.

Belongs to the peptidase S54 family. As to quaternary structure, homodimer, or homooligomer. Interacts with TGFA and HBEGF. Interacts with EGF; may retain EGF in the endoplasmic reticulum and regulates its degradation through the endoplasmic reticulum-associated degradation (ERAD). Interacts (via cytoplasmic N-terminus) with FRMD8/iTAP; this interaction leads to mutual protein stabilization. Interacts with ADAM17/TACE.

The protein resides in the endoplasmic reticulum membrane. Its subcellular location is the golgi apparatus membrane. Its function is as follows. Regulates ADAM17 protease, a sheddase of the epidermal growth factor (EGF) receptor ligands and TNF, thereby plays a role in sleep, cell survival, proliferation, migration and inflammation. Does not exhibit any protease activity on its own. The chain is Inactive rhomboid protein 1 (RHBDF1) from Papio anubis (Olive baboon).